The chain runs to 118 residues: Large ribosomal subunit protein bL20 (118 aa).

It belongs to the bacterial ribosomal protein bL20 family.

Functionally, binds directly to 23S ribosomal RNA and is necessary for the in vitro assembly process of the 50S ribosomal subunit. It is not involved in the protein synthesizing functions of that subunit. The sequence is that of Large ribosomal subunit protein bL20 from Staphylococcus epidermidis (strain ATCC 35984 / DSM 28319 / BCRC 17069 / CCUG 31568 / BM 3577 / RP62A).